We begin with the raw amino-acid sequence, 243 residues long: Pyridoxine 5'-phosphate synthase (243 aa).

Asn9 lines the 3-amino-2-oxopropyl phosphate pocket. 11–12 provides a ligand contact to 1-deoxy-D-xylulose 5-phosphate; it reads DH. Position 20 (Arg20) interacts with 3-amino-2-oxopropyl phosphate. Catalysis depends on His45, which acts as the Proton acceptor. Residues Arg47 and His52 each contribute to the 1-deoxy-D-xylulose 5-phosphate site. Catalysis depends on Glu72, which acts as the Proton acceptor. Position 102 (Thr102) interacts with 1-deoxy-D-xylulose 5-phosphate. His193 acts as the Proton donor in catalysis. 3-amino-2-oxopropyl phosphate contacts are provided by residues Gly194 and 215–216; that span reads GH.

The protein belongs to the PNP synthase family. In terms of assembly, homooctamer; tetramer of dimers.

The protein resides in the cytoplasm. It carries out the reaction 3-amino-2-oxopropyl phosphate + 1-deoxy-D-xylulose 5-phosphate = pyridoxine 5'-phosphate + phosphate + 2 H2O + H(+). It functions in the pathway cofactor biosynthesis; pyridoxine 5'-phosphate biosynthesis; pyridoxine 5'-phosphate from D-erythrose 4-phosphate: step 5/5. In terms of biological role, catalyzes the complicated ring closure reaction between the two acyclic compounds 1-deoxy-D-xylulose-5-phosphate (DXP) and 3-amino-2-oxopropyl phosphate (1-amino-acetone-3-phosphate or AAP) to form pyridoxine 5'-phosphate (PNP) and inorganic phosphate. The chain is Pyridoxine 5'-phosphate synthase from Shigella boydii serotype 4 (strain Sb227).